The primary structure comprises 312 residues: Ribonuclease HIII (312 aa).

The 217-residue stretch at 95 to 311 folds into the RNase H type-2 domain; sequence FNCIGSDEAG…REKAQKILKP (217 aa). A divalent metal cation-binding residues include Asp101, Glu102, and Asp206.

This sequence belongs to the RNase HII family. RnhC subfamily. The cofactor is Mn(2+). It depends on Mg(2+) as a cofactor.

It localises to the cytoplasm. It carries out the reaction Endonucleolytic cleavage to 5'-phosphomonoester.. Functionally, endonuclease that specifically degrades the RNA of RNA-DNA hybrids. The protein is Ribonuclease HIII of Staphylococcus aureus (strain USA300).